The following is a 246-amino-acid chain: tRNA (guanine-N(1)-)-methyltransferase (246 aa).

S-adenosyl-L-methionine contacts are provided by residues Gly113 and 133–138; that span reads IGDYVL.

Belongs to the RNA methyltransferase TrmD family. Homodimer.

The protein localises to the cytoplasm. It carries out the reaction guanosine(37) in tRNA + S-adenosyl-L-methionine = N(1)-methylguanosine(37) in tRNA + S-adenosyl-L-homocysteine + H(+). In terms of biological role, specifically methylates guanosine-37 in various tRNAs. This chain is tRNA (guanine-N(1)-)-methyltransferase, found in Haemophilus influenzae (strain PittEE).